A 401-amino-acid polypeptide reads, in one-letter code: MTKQNKSALNSNIDFIQLKLYDFFDEKIDQEKIISKRLNKTPNFENTNHKLFLDENNTFKYDNPICPVCGSHKIIKKGTIKKNKQNTNGKTTEFKEQQYQCKKCGKKFGIYNNPLIGENKQFLQEIMDKIPGIMKIGYQSLRKISKYFEIFLGIRISHQTIKNWSDKNHEESISNEKFEYSGYYLYDEQFLRLNGTRHYRLTLFDAILNIPVTERIVRRRIPKNTKKFILESTENKPFICLTTDLFPMYRNVADEIEVKHQLCIFHLFQTINHKLKVYCRRNKINGKQRDHIYENAQELKNCFRQNSKKEAIEQFKQYLQKYTAIPVVLKDFIRKHIINHFHRYVEYLDDENIEKTSNKVENYYRQTNPEKIKKIYKTKNGILTFLDYQMQNWTEKHIKIK.

This polypeptide is involved in transposition, and should therefore bind to nucleic acids. The polypeptide is Insertion element ISM1 uncharacterized 48.3 kDa protein (Methanobrevibacter smithii).